We begin with the raw amino-acid sequence, 230 residues long: MKQLEELLSTSFDIQFNDLTLLETAFTHTSYANEHRLLNVSHNERLEFLGDAVLQLIISEYLFAKYPKKTEGDMSKLRSMIVREESLAGFSRFCSFDAYIKLGKGEEKSGGRRRDTILGDLFEAFLGALLLDKGIDAVRRFLKQVMIPQVEKGNFERVRDYKTCLQEFLQTKGDVAIDYQVISEKGPAHAKQFEVSIVVNGAVLSKGLGKSKKLAEQDAAKNALAQLSEV.

One can recognise an RNase III domain in the interval 1–134 (MKQLEELLST…FLGALLLDKG (134 aa)). Residue Glu-47 coordinates Mg(2+). Residue Asp-51 is part of the active site. Mg(2+) is bound by residues Asp-120 and Glu-123. Glu-123 is a catalytic residue. Residues 160–229 (DYKTCLQEFL…AKNALAQLSE (70 aa)) form the DRBM domain.

The protein belongs to the ribonuclease III family. Homodimer. Requires Mg(2+) as cofactor.

The protein resides in the cytoplasm. It carries out the reaction Endonucleolytic cleavage to 5'-phosphomonoester.. Functionally, digests double-stranded RNA. Involved in the processing of primary rRNA transcript to yield the immediate precursors to the large and small rRNAs (23S and 16S). Processes some mRNAs, and tRNAs when they are encoded in the rRNA operon. Processes pre-crRNA and tracrRNA of type II CRISPR loci if present in the organism. This chain is Ribonuclease 3, found in Streptococcus pyogenes serotype M28 (strain MGAS6180).